The sequence spans 399 residues: Ribonuclease D (399 aa).

The 167-residue stretch at 31 to 197 folds into the 3'-5' exonuclease domain; that stretch reads RVVTDNTALL…PLYHILEKEL (167 aa). Residues 239–318 form the HRDC domain; sequence NPLELSRLRV…SQARRISSND (80 aa).

It belongs to the RNase D family. A divalent metal cation is required as a cofactor.

Its subcellular location is the cytoplasm. It catalyses the reaction Exonucleolytic cleavage that removes extra residues from the 3'-terminus of tRNA to produce 5'-mononucleotides.. In terms of biological role, exonuclease involved in the 3' processing of various precursor tRNAs. Initiates hydrolysis at the 3'-terminus of an RNA molecule and releases 5'-mononucleotides. This Haemophilus influenzae (strain ATCC 51907 / DSM 11121 / KW20 / Rd) protein is Ribonuclease D.